Here is a 752-residue protein sequence, read N- to C-terminus: Protein SEY1 homolog 1 (752 aa).

Topologically, residues 1–674 (MIKNQGDRYH…QKHKQDFLQN (674 aa)) are cytoplasmic. The GB1/RHD3-type G domain maps to 40 to 265 (GKKYNIVSII…YEKNVRWSDM (226 aa)). Residue 50-57 (GSQSTGKS) participates in GTP binding. A coiled-coil region spans residues 445 to 465 (NQLKSFVEAQLASFKQQLDNI). Residues 675–695 (IPKPFWFLLLFFMYDDVLRWM) traverse the membrane as a helical segment. Residues 696 to 698 (GNP) are Lumenal-facing. The helical transmembrane segment at 699-719 (LFLYPILIILCFIGFCIAIGL) threads the bilayer. Residues 720–752 (HSLPKLAFQTVFRTINQALLPLIFGGISKLKTS) are Cytoplasmic-facing.

The protein belongs to the TRAFAC class dynamin-like GTPase superfamily. GB1/RHD3 GTPase family. RHD3 subfamily.

It localises to the endoplasmic reticulum membrane. Its function is as follows. Probable GTP-binding protein that may be involved in cell development. This chain is Protein SEY1 homolog 1, found in Paramecium tetraurelia.